We begin with the raw amino-acid sequence, 284 residues long: Steroidogenic acute regulatory protein, mitochondrial (284 aa).

The transit peptide at 1-62 directs the protein to the mitochondrion; that stretch reads MFLATFKLCA…RRSSLLGSQL (62 aa). Phosphoserine; by PKA is present on residues serine 56 and serine 194. One can recognise an START domain in the interval 66 to 279; the sequence is LYSDQELSYI…LRKRLEASPA (214 aa).

In terms of assembly, may interact with TSPO. Expressed within glia and neurons in discrete regions of the brain.

It localises to the mitochondrion. It catalyses the reaction cholesterol(in) = cholesterol(out). It functions in the pathway steroid metabolism; cholesterol metabolism. In terms of biological role, plays a key role in steroid hormone synthesis by enhancing the metabolism of cholesterol into pregnenolone. Transporter that binds to and transport cholesterol through the intermembrane space of the mitochondrion. The chain is Steroidogenic acute regulatory protein, mitochondrial (Star) from Mus musculus (Mouse).